The chain runs to 429 residues: Acetylornithine aminotransferase (429 aa).

Residues 126 to 127 and F160 each bind pyridoxal 5'-phosphate; that span reads GA. R163 is a N(2)-acetyl-L-ornithine binding site. Residue 251–254 participates in pyridoxal 5'-phosphate binding; that stretch reads DEVQ. K280 is modified (N6-(pyridoxal phosphate)lysine). S307 is a binding site for N(2)-acetyl-L-ornithine. A pyridoxal 5'-phosphate-binding site is contributed by T308.

The protein belongs to the class-III pyridoxal-phosphate-dependent aminotransferase family. ArgD subfamily. As to quaternary structure, homodimer. It depends on pyridoxal 5'-phosphate as a cofactor.

It localises to the cytoplasm. It carries out the reaction N(2)-acetyl-L-ornithine + 2-oxoglutarate = N-acetyl-L-glutamate 5-semialdehyde + L-glutamate. The protein operates within amino-acid biosynthesis; L-arginine biosynthesis; N(2)-acetyl-L-ornithine from L-glutamate: step 4/4. N-acetylornithine aminotransferase activity is stimulated by the addition of Mg(2+), Ca(2+) or Mn(2+), and inhibited by the addition of Zn(2+), Cu(2+), Co(2+) or Ni(2+). Functionally, catalyzes the reversible conversion of N-acetylornithine to N-acetylglutamate-5-semialdehyde. In vitro, also shows very low ornithine aminotransferase (OAT) and gamma-aminobutyrate aminotransferase (GABA-AT) activity, catalyzing the conversion of ornithine (Orn) to glutamate-5-semialdehyde and of gamma-aminobutyric acid (GABA) to succinate semialdehyde. It has been shown to function as a GABA-AT and contributes to closing the tricarboxylic acid cycle of Synechocystis sp. PCC6803 via the GABA shunt. However, the catalytic efficiency toward N-acetylornithine is 2500-fold and 10700-fold higher than that toward ornithine and gamma-aminobutyrate, respectively, indicating that the protein mainly functions as an N-acetylornithine aminotransferase. This Synechocystis sp. (strain ATCC 27184 / PCC 6803 / Kazusa) protein is Acetylornithine aminotransferase.